Here is a 217-residue protein sequence, read N- to C-terminus: GTP cyclohydrolase 1 (217 aa).

Positions 109, 112, and 180 each coordinate Zn(2+).

The protein belongs to the GTP cyclohydrolase I family. Toroid-shaped homodecamer, composed of two pentamers of five dimers.

It catalyses the reaction GTP + H2O = 7,8-dihydroneopterin 3'-triphosphate + formate + H(+). It functions in the pathway cofactor biosynthesis; 7,8-dihydroneopterin triphosphate biosynthesis; 7,8-dihydroneopterin triphosphate from GTP: step 1/1. This chain is GTP cyclohydrolase 1, found in Aliivibrio fischeri (strain ATCC 700601 / ES114) (Vibrio fischeri).